A 182-amino-acid polypeptide reads, in one-letter code: Regulatory protein RecX (182 aa).

A disordered region spans residues 12 to 54 (LSQRDHSESELRRKLAAPPFSAKGNWGKRSGAKSSNLVESNPV). Over residues 13–24 (SQRDHSESELRR) the composition is skewed to basic and acidic residues. The span at 43 to 54 (AKSSNLVESNPV) shows a compositional bias: polar residues.

This sequence belongs to the RecX family.

The protein localises to the cytoplasm. Modulates RecA activity. The chain is Regulatory protein RecX from Yersinia pseudotuberculosis serotype I (strain IP32953).